Consider the following 238-residue polypeptide: Uridylate kinase (238 aa).

Residue lysine 12–glycine 15 coordinates ATP. An involved in allosteric activation by GTP region spans residues glycine 20–glycine 25. Position 54 (glycine 54) interacts with UMP. ATP is bound by residues glycine 55 and arginine 59. UMP contacts are provided by residues aspartate 74 and threonine 135–threonine 142. Residues asparagine 163, tyrosine 169, and aspartate 172 each coordinate ATP.

Belongs to the UMP kinase family. Homohexamer.

It localises to the cytoplasm. The enzyme catalyses UMP + ATP = UDP + ADP. The protein operates within pyrimidine metabolism; CTP biosynthesis via de novo pathway; UDP from UMP (UMPK route): step 1/1. Allosterically activated by GTP. Inhibited by UTP. Functionally, catalyzes the reversible phosphorylation of UMP to UDP. The chain is Uridylate kinase from Lactococcus lactis subsp. lactis (strain IL1403) (Streptococcus lactis).